The primary structure comprises 2006 residues: Supporter of activation of yellow protein (2006 aa).

Disordered regions lie at residues 1–208 (MNDL…RRVE), 313–347 (MPAK…SSLA), 458–564 (EEKP…AQSQ), 744–794 (DTQD…DPAR), 821–916 (DLEG…KSRR), 929–1029 (VSVG…NNNS), 1044–1082 (CSSS…SDPL), and 1099–1196 (QQLR…SAVA). Over residues 10–60 (VAATSSSGSESGTAVESAAATSTAGSAGAAGRPQSNCSANSNAKSVAASST) the composition is skewed to low complexity. The segment covering 67 to 81 (VSSTSSPAQRDQQLN) has biased composition (polar residues). Pro residues predominate over residues 118-128 (SPPPTLPPPTT). Over residues 129-168 (PCDDAPSTTGASASASSASGEAPSAASAAGAAGGPMAATA) the composition is skewed to low complexity. A compositionally biased stretch (polar residues) spans 189-199 (ANPNSNANESQ). The span at 321–347 (LSSLSPASASSSSASSSSSSSSSSSLA) shows a compositional bias: low complexity. The span at 485 to 494 (GGESNSSSQE) shows a compositional bias: polar residues. The span at 525–534 (SLSKEHDPKI) shows a compositional bias: basic and acidic residues. Low complexity predominate over residues 543–563 (ASNGIASGGSKASKASKSAQS). A compositionally biased stretch (basic and acidic residues) spans 744–758 (DTQDNNNENHLKRTN). Composition is skewed to polar residues over residues 759–769 (SEGNESPSSRL) and 828–844 (PPTQ…NGAL). The span at 861-870 (PATPQPPPVA) shows a compositional bias: pro residues. Composition is skewed to basic and acidic residues over residues 936–945 (ADMKAKEKES) and 963–972 (ESPKTRDHRP). Low complexity-rich tracts occupy residues 978-990 (RTTT…LQPT) and 1018-1029 (SSESESNNNNNS). Residues 1053-1080 (GAAANQQVIGGSGSSSMLPPTTILSSSD) show a composition bias toward polar residues. Low complexity predominate over residues 1103–1112 (SSRPSSISCG). Positions 1147 to 1158 (GRGRGRRSRGGR) are enriched in basic residues. Low complexity predominate over residues 1161 to 1173 (GSSSVDRAVSVGG). An SAY region spans residues 1340-1573 (MIQEQVALYL…PPTDLMAQLL (234 aa)). Residues 1579-1685 (AVGSDEIKTS…AGSEDEDGNE (107 aa)) form a disordered region. Composition is skewed to low complexity over residues 1627–1652 (TASS…SSDT) and 1660–1677 (FSST…SGAG). The segment at 1694–1751 (TCGVCLRSQHRNARDMPEAFIRCYTCRKRVHPSCVDMPPRMVGRVRNYNWQCAGCKCC) adopts a PHD-type 1; degenerate zinc-finger fold. Residues 1753–1796 (KCRSSQRPGKMLYCEQCDRGYHIYCLGLRTVPDGRWSCERCCFC) form a PHD-type 2; degenerate zinc finger. Positions 1887–1911 (TSAQTDDSPMPSPGLTTNGGRALSP) are disordered.

The protein belongs to the SAYP family. Widely expressed. Highly expressed in ovary. Expressed in nursing cells and growing oocytes at all stages of development and accumulates in mature oocytes. Expressed in the nuclei of syncytium blastoderm of early embryos and in the nuclei of different tissues of late embryos, larvae, and adults.

It is found in the nucleus. It localises to the cytoplasm. The protein localises to the chromosome. In terms of biological role, essential transcription regulator during early development. Coactivates transcription of some euchromatin genes and repress transcription in of euchromatin genes translocated to heterochromatin. The sequence is that of Supporter of activation of yellow protein (e(y)3) from Drosophila melanogaster (Fruit fly).